A 215-amino-acid chain; its full sequence is Pyridoxine/pyridoxamine 5'-phosphate oxidase (215 aa).

Residues 11 to 14 (RRDY) and Lys-69 contribute to the substrate site. Residues 64–69 (RVVLLK), 79–80 (YT), Lys-86, and Gln-108 contribute to the FMN site. Tyr-126, Arg-130, and Ser-134 together coordinate substrate. Residues 143 to 144 (QS) and Trp-188 contribute to the FMN site. 194 to 196 (RLH) lines the substrate pocket. Arg-198 contacts FMN.

This sequence belongs to the pyridoxamine 5'-phosphate oxidase family. As to quaternary structure, homodimer. It depends on FMN as a cofactor.

The enzyme catalyses pyridoxamine 5'-phosphate + O2 + H2O = pyridoxal 5'-phosphate + H2O2 + NH4(+). The catalysed reaction is pyridoxine 5'-phosphate + O2 = pyridoxal 5'-phosphate + H2O2. It functions in the pathway cofactor metabolism; pyridoxal 5'-phosphate salvage; pyridoxal 5'-phosphate from pyridoxamine 5'-phosphate: step 1/1. Its pathway is cofactor metabolism; pyridoxal 5'-phosphate salvage; pyridoxal 5'-phosphate from pyridoxine 5'-phosphate: step 1/1. Catalyzes the oxidation of either pyridoxine 5'-phosphate (PNP) or pyridoxamine 5'-phosphate (PMP) into pyridoxal 5'-phosphate (PLP). The polypeptide is Pyridoxine/pyridoxamine 5'-phosphate oxidase (Legionella pneumophila (strain Paris)).